Reading from the N-terminus, the 203-residue chain is Probable flagellin 1 (203 aa).

Positions 1–11 (MGMRFLKNEKG) are excised as a propeptide.

The protein belongs to the archaeal flagellin family.

Its subcellular location is the archaeal flagellum. Its function is as follows. Flagellin is the subunit protein which polymerizes to form the filaments of archaeal flagella. The sequence is that of Probable flagellin 1 (flaB1) from Archaeoglobus fulgidus (strain ATCC 49558 / DSM 4304 / JCM 9628 / NBRC 100126 / VC-16).